The following is a 219-amino-acid chain: Histone H1.01 (219 aa).

2 stretches are compositionally biased toward low complexity: residues 1-19 (MSETAPAAAPDAPAPGAKA) and 27-39 (AAGGAKARKPAGP). Disordered regions lie at residues 1–40 (MSETAPAAAPDAPAPGAKAAAKKPKKAAGGAKARKPAGPS) and 94–219 (LVQT…AKKK). Ser-2 bears the N-acetylserine mark. The 74-residue stretch at 37–110 (AGPSVTELIT…GASGSFRLNK (74 aa)) folds into the H15 domain. Composition is skewed to basic residues over residues 119 to 134 (APRKRATAAKPKKPAA), 142 to 159 (KKPKKAAAVKKSPKKAKK), 167 to 185 (KAAKSPKKAAKAGRPKKAA), and 192 to 219 (KAVKPKAAKPKATKPKAAKAKKTAAKKK).

Belongs to the histone H1/H5 family.

The protein resides in the nucleus. The protein localises to the chromosome. Functionally, histones H1 are necessary for the condensation of nucleosome chains into higher-order structures. The polypeptide is Histone H1.01 (Gallus gallus (Chicken)).